The following is a 331-amino-acid chain: Phosphate acyltransferase (331 aa).

It belongs to the PlsX family. Homodimer. Probably interacts with PlsY.

The protein resides in the cytoplasm. The enzyme catalyses a fatty acyl-[ACP] + phosphate = an acyl phosphate + holo-[ACP]. The protein operates within lipid metabolism; phospholipid metabolism. Catalyzes the reversible formation of acyl-phosphate (acyl-PO(4)) from acyl-[acyl-carrier-protein] (acyl-ACP). This enzyme utilizes acyl-ACP as fatty acyl donor, but not acyl-CoA. This chain is Phosphate acyltransferase, found in Clostridium acetobutylicum (strain ATCC 824 / DSM 792 / JCM 1419 / IAM 19013 / LMG 5710 / NBRC 13948 / NRRL B-527 / VKM B-1787 / 2291 / W).